Here is a 1234-residue protein sequence, read N- to C-terminus: DNA-directed RNA polymerase subunit beta (1234 aa).

This sequence belongs to the RNA polymerase beta chain family. In terms of assembly, the RNAP catalytic core consists of 2 alpha, 1 beta, 1 beta' and 1 omega subunit. When a sigma factor is associated with the core the holoenzyme is formed, which can initiate transcription.

It catalyses the reaction RNA(n) + a ribonucleoside 5'-triphosphate = RNA(n+1) + diphosphate. In terms of biological role, DNA-dependent RNA polymerase catalyzes the transcription of DNA into RNA using the four ribonucleoside triphosphates as substrates. In Clostridium perfringens (strain SM101 / Type A), this protein is DNA-directed RNA polymerase subunit beta.